The primary structure comprises 494 residues: Ketol-acid reductoisomerase (NADP(+)) (494 aa).

The KARI N-terminal Rossmann domain maps to 14-208 (LDQIGRCRFM…GGDRAGVLES (195 aa)). NADP(+) contacts are provided by residues 45–48 (CGAQ), Arg68, Arg76, Ser78, and 108–110 (DKQ). His132 is a catalytic residue. Position 158 (Gly158) interacts with NADP(+). 2 KARI C-terminal knotted domains span residues 209–344 (SFVA…NAPE) and 345–487 (YNGK…MTDM). 4 residues coordinate Mg(2+): Asp217, Glu221, Glu389, and Glu393. Position 414 (Ser414) interacts with substrate.

It belongs to the ketol-acid reductoisomerase family. The cofactor is Mg(2+).

The catalysed reaction is (2R)-2,3-dihydroxy-3-methylbutanoate + NADP(+) = (2S)-2-acetolactate + NADPH + H(+). The enzyme catalyses (2R,3R)-2,3-dihydroxy-3-methylpentanoate + NADP(+) = (S)-2-ethyl-2-hydroxy-3-oxobutanoate + NADPH + H(+). It participates in amino-acid biosynthesis; L-isoleucine biosynthesis; L-isoleucine from 2-oxobutanoate: step 2/4. The protein operates within amino-acid biosynthesis; L-valine biosynthesis; L-valine from pyruvate: step 2/4. Involved in the biosynthesis of branched-chain amino acids (BCAA). Catalyzes an alkyl-migration followed by a ketol-acid reduction of (S)-2-acetolactate (S2AL) to yield (R)-2,3-dihydroxy-isovalerate. In the isomerase reaction, S2AL is rearranged via a Mg-dependent methyl migration to produce 3-hydroxy-3-methyl-2-ketobutyrate (HMKB). In the reductase reaction, this 2-ketoacid undergoes a metal-dependent reduction by NADPH to yield (R)-2,3-dihydroxy-isovalerate. The protein is Ketol-acid reductoisomerase (NADP(+)) of Pseudoalteromonas atlantica (strain T6c / ATCC BAA-1087).